The sequence spans 151 residues: uncharacterized protein (151 aa).

The disordered stretch occupies residues 123-151 (PAGQNAGTGPAQKLKTDETRCYERRGGSQ). Residues 136–151 (LKTDETRCYERRGGSQ) are compositionally biased toward basic and acidic residues.

This is an uncharacterized protein from Triticum aestivum (Wheat).